A 131-amino-acid polypeptide reads, in one-letter code: D-ribose pyranase (131 aa).

The active-site Proton donor is H20. Residues D28, H98, and 120-122 (YAN) each bind substrate.

The protein belongs to the RbsD / FucU family. RbsD subfamily. As to quaternary structure, homodecamer.

The protein localises to the cytoplasm. It carries out the reaction beta-D-ribopyranose = beta-D-ribofuranose. It functions in the pathway carbohydrate metabolism; D-ribose degradation; D-ribose 5-phosphate from beta-D-ribopyranose: step 1/2. Functionally, catalyzes the interconversion of beta-pyran and beta-furan forms of D-ribose. The protein is D-ribose pyranase of Bacillus cereus (strain AH187).